Reading from the N-terminus, the 31-residue chain is Nemertide alpha-7 (31 aa).

Cystine bridges form between cysteine 2/cysteine 16, cysteine 9/cysteine 20, and cysteine 15/cysteine 26. Proline 29 is subject to 4-hydroxyproline.

It belongs to the nemertide family. In terms of tissue distribution, confined to the epidermis and to the mucus layer.

It is found in the secreted. Potent toxin, demonstrating strong inhibitory effects on insect sodium channels (Nav) and reduced activity on mammalian sodium channels. Potently inhibits inactivation of insect sodium channels of B.germanica (BgNav1) (EC(50)=9.5 nM). The toxin also delays the inactivation of most mammalian Nav (human Nav1.1/SCN1A; EC(50)=171.5 nM, rat Nav1.2/SCN2A; EC(50)=50.4 nM, rat Nav1.3/SCN3A; EC(50)=170.2 nM, rat Nav1.4/SCN4A; EC(50)=810.6 nM, human Nav1.5/SCN5A; EC(50)=155.6 nM, mouse Nav1.6/SCN8A; EC(50)=147.6 nM, human Nav1.9/SCN9A; EC(50)=129 nM). Inactivation is completely prevented by a concentration of 1 uM, resulting in sustained, non-inactivating currents. In addition, the toxin significantly enhances the recovery from inactivation, and the open state is not required for the toxin to interact with the channel. In vivo, injection into brine shrimp (Artemia salina) stops movement or causes death after 24 hours (EC(50)=6.1 uM). The chain is Nemertide alpha-7 from Lineus ruber (Red bootlace).